We begin with the raw amino-acid sequence, 344 residues long: MATRKESTSTPTAPMASTSPGATLDSPVKQIQIEGLVVLKMIKHYQEEGQGSEVVQGVLLGLVVEDRLEITNCFPFPQHTEDDADFDEVQYQMEMMRSLRHVNIDHLHVGWYQSTYYGSFVSRALLDSQFSYQHAIEESVVLIYDPIKTAQGSLSLKAYRLTPKLMEICKEKDFSAEGLKKAMIGFEHMFEEVPIVIKNSHLINVLMWELEEKCTVADKHELLNLSSSNHLEKSLQLLMDRVDDMSQDIVKYNTYSRNLSKQQQQKHQYTQRRQQENAQRQTRGETPLPEEDVSKMFKPPQPPPRMDTLLIAGQINNYCQNVKEFTSQNLGKLFMAEALQGHNS.

The tract at residues 1-24 (MATRKESTSTPTAPMASTSPGATL) is disordered. Residues 8-23 (TSTPTAPMASTSPGAT) show a composition bias toward low complexity. One can recognise an MPN domain in the interval 31-165 (IQIEGLVVLK…LKAYRLTPKL (135 aa)). The segment at 256-305 (SRNLSKQQQQKHQYTQRRQQENAQRQTRGETPLPEEDVSKMFKPPQPPPR) is disordered. The segment covering 261 to 272 (KQQQQKHQYTQR) has biased composition (low complexity).

It belongs to the eIF-3 subunit H family. Component of the eukaryotic translation initiation factor 3 (eIF-3) complex, which is composed of 13 subunits: eif3a, eif3b, eif3c, eif3d, eif3e, eif3f, eif3g, eif3h, eif3i, eif3j, eif3k, eif3l and eif3m.

It is found in the cytoplasm. Its function is as follows. Component of the eukaryotic translation initiation factor 3 (eIF-3) complex, which is involved in protein synthesis of a specialized repertoire of mRNAs and, together with other initiation factors, stimulates binding of mRNA and methionyl-tRNAi to the 40S ribosome. The eIF-3 complex specifically targets and initiates translation of a subset of mRNAs involved in cell proliferation. In Salmo salar (Atlantic salmon), this protein is Eukaryotic translation initiation factor 3 subunit H (eif3h).